A 477-amino-acid chain; its full sequence is MKGLPVLLWLCVVVCSSYPLHDSARDDDAGMELLQKYLENYYGLAKDVKQFIKKKDSSLIVKKIQEMQKFLGLEMTGKLDSNTMELMHKPRCGVPDVGGFSTFPGSPKWRKSHITYRIVNYTPDLPRQSVDSAIEKALKVWEEVTPLTFSRISEGEADIMISFAVGEHGDFVPFDGPGTVLAHAYAPGPGINGDAHFDDDERWTEDVTGTNLFLVAAHELGHSLGLYHSAKAEALMYPVYKSSTDLSRFHLSQDDVDGIQSLYGTPTASPDVLVVPTKSNSLEPETSPMCSSTLFFDAVSTLRGEVLFFKDRHFWRKSLRTPEPEFYLISSFWPSLPSNMDAAYEVTNRDTVFIFKGNQFWAIRGHEELAGYPKSIHTLGLPATVKKIDAAISNKEKRKTYFFVEDKYWRFDEKKQSMEPGFPRKIAEDFPGVDSRVDAVFEAFGFLYFFSGSSQLEFDPNAKKVTHILKSNSWFNC.

The signal sequence occupies residues 1–17 (MKGLPVLLWLCVVVCSS). The propeptide at 18–99 (YPLHDSARDD…PRCGVPDVGG (82 aa)) is activation peptide. The short motif at 90 to 97 (PRCGVPDV) is the Cysteine switch element. Position 92 (C92) interacts with Zn(2+). 2 residues coordinate Ca(2+): D124 and D158. Residues H168 and D170 each contribute to the Zn(2+) site. Ca(2+) is bound by residues D175, G176, G178, and V180. H183 lines the Zn(2+) pocket. Ca(2+) contacts are provided by G190, N192, and D194. Position 196 (H196) interacts with Zn(2+). Residues D198, D199, and E201 each contribute to the Ca(2+) site. H218 is a binding site for Zn(2+). Residue E219 is part of the active site. 2 residues coordinate Zn(2+): H222 and H228. Hemopexin repeat units follow at residues 287–336 (SPMC…WPSL), 337–383 (PSNM…GLPA), 385–433 (VKKI…FPGV), and 434–477 (DSRV…WFNC). C290 and C477 are joined by a disulfide. D297 serves as a coordination point for Ca(2+). D389 and D438 together coordinate Ca(2+).

Belongs to the peptidase M10A family. Requires Ca(2+) as cofactor. It depends on Zn(2+) as a cofactor.

The protein resides in the secreted. It is found in the extracellular space. It localises to the extracellular matrix. The catalysed reaction is Preferential cleavage where P1', P2' and P3' are hydrophobic residues.. In terms of biological role, metalloproteinase with a rather broad substrate specificity that can degrade fibronectin, laminin, gelatins of type I, III, IV, and V; collagens III, IV, X, and IX, and cartilage proteoglycans. Activates different molecules including growth factors, plasminogen or other matrix metalloproteinases such as MMP9. Once released into the extracellular matrix (ECM), the inactive pro-enzyme is activated by the plasmin cascade signaling pathway. Also acts intracellularly. For example, in dopaminergic neurons, gets activated by the serine protease HTRA2 upon stress and plays a pivotal role in DA neuronal degeneration by mediating microglial activation and alpha-synuclein/SNCA cleavage. In addition, plays a role in immune response and possesses antiviral activity against various viruses. Mechanistically, translocates from the cytoplasm into the cell nucleus upon virus infection to influence NF-kappa-B activities. The sequence is that of Stromelysin-1 (Mmp3) from Mus musculus (Mouse).